Here is a 299-residue protein sequence, read N- to C-terminus: Fibrinogen silencer-binding protein (299 aa).

Residue Lys94 forms a Glycyl lysine isopeptide (Lys-Gly) (interchain with G-Cter in SUMO2) linkage.

Interacts with APBA1 (via PDZ 1 and 2 domains). Expressed in multiple tissues including brain.

The protein resides in the nucleus. In terms of biological role, transcriptional repressor that down-regulates the expression of the fibrinogen gamma chain. Represses transcription of GSK3B gene promoter via its interaction with APBA1. The sequence is that of Fibrinogen silencer-binding protein (FSBP) from Homo sapiens (Human).